Here is a 323-residue protein sequence, read N- to C-terminus: NADH-ubiquinone oxidoreductase chain 1 (323 aa).

The next 8 membrane-spanning stretches (helical) occupy residues 8 to 28 (LLNP…LTLI), 74 to 94 (LLFI…WLPL), 105 to 125 (LGML…LGSG), 150 to 170 (SLGL…LTTF), 176 to 196 (TIWL…STLA), 227 to 247 (LFFL…TILF), 258 to 278 (ELTS…FLWV), and 298 to 318 (FLPI…FTGS).

The protein belongs to the complex I subunit 1 family.

It localises to the mitochondrion inner membrane. The catalysed reaction is a ubiquinone + NADH + 5 H(+)(in) = a ubiquinol + NAD(+) + 4 H(+)(out). Its function is as follows. Core subunit of the mitochondrial membrane respiratory chain NADH dehydrogenase (Complex I) that is believed to belong to the minimal assembly required for catalysis. Complex I functions in the transfer of electrons from NADH to the respiratory chain. The immediate electron acceptor for the enzyme is believed to be ubiquinone. The sequence is that of NADH-ubiquinone oxidoreductase chain 1 (MT-ND1) from Latimeria chalumnae (Coelacanth).